A 750-amino-acid polypeptide reads, in one-letter code: NAD(P)H-quinone oxidoreductase subunit 5, chloroplastic (750 aa).

A run of 16 helical transmembrane segments spans residues 9–29 (WIIPFLPLPVPMLIGVGLLLF), 40–60 (WAFTSILLLSIVMIFATNLSI), 89–109 (IDPLTSIMSMLITTVGIMVLI), 125–145 (FAYMSFFSTSMFGLVTSSNLI), 147–167 (IYIFWELVGMCSYLLIGFWFT), 185–205 (GDFGLLLGILGFYWITGSFEF), 230–250 (AALLFAGAVAKSAQFPLHIWL), 258–278 (TPISALIHAATMVAAGIFLVA), 283–303 (LFIVIPYILNIISLIGLITVL), 327–347 (LGYMILALGIGSYRSALFHLI), 354–374 (ALLFLGSGSVIHSMETIVGYS), 396–416 (TSFLLGTLSLSGIPPLACFWS), 425–445 (WLYSPIFAIIAWATAGLTAFY), 548–568 (LFPLLVLVLFTLFVGSIGIPF), 607–627 (IFSVSIAYFGIFLASFLYKPI), and 724–744 (LFFYFCCVSIFLVIYYKFYLF).

It belongs to the complex I subunit 5 family. NDH is composed of at least 16 different subunits, 5 of which are encoded in the nucleus.

It is found in the plastid. Its subcellular location is the chloroplast thylakoid membrane. The catalysed reaction is a plastoquinone + NADH + (n+1) H(+)(in) = a plastoquinol + NAD(+) + n H(+)(out). It catalyses the reaction a plastoquinone + NADPH + (n+1) H(+)(in) = a plastoquinol + NADP(+) + n H(+)(out). NDH shuttles electrons from NAD(P)H:plastoquinone, via FMN and iron-sulfur (Fe-S) centers, to quinones in the photosynthetic chain and possibly in a chloroplast respiratory chain. The immediate electron acceptor for the enzyme in this species is believed to be plastoquinone. Couples the redox reaction to proton translocation, and thus conserves the redox energy in a proton gradient. This is NAD(P)H-quinone oxidoreductase subunit 5, chloroplastic (ndhF) from Tecoma stans (Yellow bells).